Consider the following 480-residue polypeptide: Prostacyclin synthase (480 aa).

Residues 1–21 traverse the membrane as a helical segment; that stretch reads MMWTALLLVGLSILVIVLYGR. Substrate contacts are provided by residues arginine 104, leucine 110, asparagine 277, 338-339, and arginine 362; that span reads TR. Heme is bound at residue cysteine 421.

Belongs to the cytochrome P450 family. Heme is required as a cofactor.

It localises to the endoplasmic reticulum membrane. The catalysed reaction is prostaglandin H2 = prostaglandin I2. The enzyme catalyses a hydroperoxyeicosatetraenoate = an oxoeicosatetraenoate + H2O. It carries out the reaction (15S)-hydroperoxy-(5Z,8Z,11Z,13E)-eicosatetraenoate = 15-oxo-(5Z,8Z,11Z,13E)-eicosatetraenoate + H2O. It catalyses the reaction (15S)-hydroperoxy-(5Z,8Z,11Z,13E)-eicosatetraenoate + AH2 = (15S)-hydroxy-(5Z,8Z,11Z,13E)-eicosatetraenoate + A + H2O. Its function is as follows. Catalyzes the isomerization of prostaglandin H2 to prostacyclin (= prostaglandin I2). Functionally, catalyzes the biosynthesis and metabolism of eicosanoids. Catalyzes the isomerization of prostaglandin H2 to prostacyclin (= prostaglandin I2), a potent mediator of vasodilation and inhibitor of platelet aggregation. Additionally, displays dehydratase activity, toward hydroperoxyeicosatetraenoates (HPETEs), especially toward (15S)-hydroperoxy-(5Z,8Z,11Z,13E)-eicosatetraenoate (15(S)-HPETE). This Danio rerio (Zebrafish) protein is Prostacyclin synthase.